A 227-amino-acid polypeptide reads, in one-letter code: Izumo sperm-egg fusion protein 4 (227 aa).

The N-terminal stretch at 1 to 24 (MFGQGRLGQAMALLLFLGMTAALA) is a signal peptide. N-linked (GlcNAc...) asparagine glycosylation is found at Asn-153 and Asn-214.

This sequence belongs to the Izumo family.

The protein resides in the secreted. In Mus musculus (Mouse), this protein is Izumo sperm-egg fusion protein 4 (Izumo4).